The following is a 525-amino-acid chain: Neutrophil cytosol factor 2 (525 aa).

TPR repeat units follow at residues 37-70, 71-104, and 121-154; these read SRIC…DKHS, AVAY…LRGN, and CEVL…KSEP. Thr233 carries the phosphothreonine modification. The region spanning 240–299 is the SH3 1 domain; the sequence is LEGEAHRVLFGFVPETPEELQVMPGNIVFVLKKGSDNWATVMFNGQKGLVPCNYLEPVEL. The segment at 304 to 343 is disordered; it reads QSQPQEDTSPESDIPPPPNSSPPGRLQLSPGHKQKEPKEL. Residues Ser324 and Ser398 each carry the phosphoserine modification. The PB1 domain occupies 350 to 428; the sequence is PYMLKVHYKY…YCLTLWCEHT (79 aa). Residues 437–457 form a disordered region; that stretch reads EPIQRENSDASKQTTEPQPKE. Positions 456-515 constitute an SH3 2 domain; the sequence is KEGTQVVAIFSYEAAQPEDLEFVEGDVILVLSHVNEEWLEGECKGKVGIFPKAFVEGCAA.

It belongs to the NCF2/NOXA1 family. As to quaternary structure, component of the phagocyte NADPH oxidase complex composed of an obligatory core heterodimer formed by the membrane proteins CYBA and CYBB and the cytosolic regulatory subunits NCF1/p47-phox, NCF2/p67-phox, NCF4/p40-phox and the small GTPase RAC1 or RAC2. Part of a cytosolic complex composed at least by NCF1, NCF2 and NCF4. Interacts with NCF4. Interacts (via the C-terminal SH3 domain) with NCF1 (via C-terminus). Interacts with SYTL1 and RAC1. May interact with NOXO1. Interacts with S100A8 and calprotectin (S100A8/9). Interacts with GBP7 (via GB1/RHD3-type G domain). Interacts with CYBB; the interaction is enhanced in the presence of GBP7.

The protein localises to the cytoplasm. NCF2, NCF1, and a membrane bound cytochrome b558 are required for activation of the latent NADPH oxidase (necessary for superoxide production). In terms of biological role, subunit of the phagocyte NADPH oxidase complex that mediates the transfer of electrons from cytosolic NADPH to O2 to produce the superoxide anion (O2(-)). In the activated complex, electrons are first transferred from NADPH to flavin adenine dinucleotide (FAD) and subsequently transferred via two heme molecules to molecular oxygen, producing superoxide through an outer-sphere reaction. Activation of the NADPH oxidase complex is initiated by the assembly of cytosolic subunits of the NADPH oxidase complex with the core NADPH oxidase complex to form a complex at the plasma membrane or phagosomal membrane. This activation process is initiated by phosphorylation dependent binding of the cytosolic NCF1/p47-phox subunit to the C-terminus of CYBA/p22-phox. The polypeptide is Neutrophil cytosol factor 2 (Mus musculus (Mouse)).